The sequence spans 457 residues: Asparagine--tRNA ligase (457 aa).

It belongs to the class-II aminoacyl-tRNA synthetase family. In terms of assembly, homodimer.

It localises to the cytoplasm. The enzyme catalyses tRNA(Asn) + L-asparagine + ATP = L-asparaginyl-tRNA(Asn) + AMP + diphosphate + H(+). In Phytoplasma australiense, this protein is Asparagine--tRNA ligase.